We begin with the raw amino-acid sequence, 123 residues long: Large ribosomal subunit protein bL19 (123 aa).

Belongs to the bacterial ribosomal protein bL19 family.

In terms of biological role, this protein is located at the 30S-50S ribosomal subunit interface and may play a role in the structure and function of the aminoacyl-tRNA binding site. This is Large ribosomal subunit protein bL19 from Ureaplasma urealyticum serovar 10 (strain ATCC 33699 / Western).